A 415-amino-acid polypeptide reads, in one-letter code: Peptide chain release factor subunit 1 (415 aa).

This sequence belongs to the eukaryotic release factor 1 family. As to quaternary structure, heterodimer of two subunits, one of which binds GTP.

The protein localises to the cytoplasm. Its function is as follows. Directs the termination of nascent peptide synthesis (translation) in response to the termination codons UAA, UAG and UGA. The chain is Peptide chain release factor subunit 1 from Thermococcus kodakarensis (strain ATCC BAA-918 / JCM 12380 / KOD1) (Pyrococcus kodakaraensis (strain KOD1)).